A 151-amino-acid chain; its full sequence is 3-hydroxyacyl-[acyl-carrier-protein] dehydratase FabZ (151 aa).

Residue His-56 is part of the active site.

Belongs to the thioester dehydratase family. FabZ subfamily.

The protein localises to the cytoplasm. The enzyme catalyses a (3R)-hydroxyacyl-[ACP] = a (2E)-enoyl-[ACP] + H2O. In terms of biological role, involved in unsaturated fatty acids biosynthesis. Catalyzes the dehydration of short chain beta-hydroxyacyl-ACPs and long chain saturated and unsaturated beta-hydroxyacyl-ACPs. The sequence is that of 3-hydroxyacyl-[acyl-carrier-protein] dehydratase FabZ from Rhodopseudomonas palustris (strain BisB18).